A 305-amino-acid polypeptide reads, in one-letter code: UDP-3-O-acyl-N-acetylglucosamine deacetylase (305 aa).

Zn(2+)-binding residues include H78, H237, and D241. The active-site Proton donor is the H264.

Belongs to the LpxC family. Requires Zn(2+) as cofactor.

It carries out the reaction a UDP-3-O-[(3R)-3-hydroxyacyl]-N-acetyl-alpha-D-glucosamine + H2O = a UDP-3-O-[(3R)-3-hydroxyacyl]-alpha-D-glucosamine + acetate. It functions in the pathway glycolipid biosynthesis; lipid IV(A) biosynthesis; lipid IV(A) from (3R)-3-hydroxytetradecanoyl-[acyl-carrier-protein] and UDP-N-acetyl-alpha-D-glucosamine: step 2/6. In terms of biological role, catalyzes the hydrolysis of UDP-3-O-myristoyl-N-acetylglucosamine to form UDP-3-O-myristoylglucosamine and acetate, the committed step in lipid A biosynthesis. This is UDP-3-O-acyl-N-acetylglucosamine deacetylase from Cupriavidus pinatubonensis (strain JMP 134 / LMG 1197) (Cupriavidus necator (strain JMP 134)).